We begin with the raw amino-acid sequence, 167 residues long: uncharacterized protein (167 aa).

Residues 1–10 (MPLRRCRAWR) show a composition bias toward basic residues. The tract at residues 1–23 (MPLRRCRAWRGHSQPGTGSRSNE) is disordered.

This is an uncharacterized protein from Sinorhizobium fredii (strain NBRC 101917 / NGR234).